The primary structure comprises 122 residues: Large ribosomal subunit protein uL14 (122 aa).

Belongs to the universal ribosomal protein uL14 family. As to quaternary structure, part of the 50S ribosomal subunit. Forms a cluster with proteins L3 and L19. In the 70S ribosome, L14 and L19 interact and together make contacts with the 16S rRNA in bridges B5 and B8.

Its function is as follows. Binds to 23S rRNA. Forms part of two intersubunit bridges in the 70S ribosome. The sequence is that of Large ribosomal subunit protein uL14 from Protochlamydia amoebophila (strain UWE25).